A 124-amino-acid chain; its full sequence is Mediator of RNA polymerase II transcription subunit 31 (124 aa).

This sequence belongs to the Mediator complex subunit 31 family. As to quaternary structure, component of the Mediator complex.

Its subcellular location is the nucleus. In terms of biological role, component of the Mediator complex, a coactivator involved in the regulated transcription of nearly all RNA polymerase II-dependent genes. Mediator functions as a bridge to convey information from gene-specific regulatory proteins to the basal RNA polymerase II transcription machinery. Mediator is recruited to promoters by direct interactions with regulatory proteins and serves as a scaffold for the assembly of a functional preinitiation complex with RNA polymerase II and the general transcription factors. The protein is Mediator of RNA polymerase II transcription subunit 31 (SOH1) of Kluyveromyces lactis (strain ATCC 8585 / CBS 2359 / DSM 70799 / NBRC 1267 / NRRL Y-1140 / WM37) (Yeast).